We begin with the raw amino-acid sequence, 226 residues long: 2-C-methyl-D-erythritol 4-phosphate cytidylyltransferase (226 aa).

This sequence belongs to the IspD/TarI cytidylyltransferase family. IspD subfamily.

The enzyme catalyses 2-C-methyl-D-erythritol 4-phosphate + CTP + H(+) = 4-CDP-2-C-methyl-D-erythritol + diphosphate. It functions in the pathway isoprenoid biosynthesis; isopentenyl diphosphate biosynthesis via DXP pathway; isopentenyl diphosphate from 1-deoxy-D-xylulose 5-phosphate: step 2/6. Functionally, catalyzes the formation of 4-diphosphocytidyl-2-C-methyl-D-erythritol from CTP and 2-C-methyl-D-erythritol 4-phosphate (MEP). In Prochlorococcus marinus (strain MIT 9312), this protein is 2-C-methyl-D-erythritol 4-phosphate cytidylyltransferase.